A 219-amino-acid chain; its full sequence is GTP-binding protein Rab-3D (219 aa).

The residue at position 2 (Ala2) is an N-acetylalanine. 29–37 (GNSSVGKTS) lines the GDP pocket. GTP-binding residues include Ser31, Ser32, Val33, Gly34, Lys35, Thr36, Ser37, Pro49, and Ser53. A Mg(2+)-binding site is contributed by Thr36. The Switch 1 motif lies at 49 to 58 (PAFVSTVGID). Positions 54 and 77 each coordinate Mg(2+). Gly80 provides a ligand contact to GTP. The short motif at 80–96 (GQERYRTITTAYYRGAM) is the Switch 2 element. Phosphothreonine is present on Thr86. Residues Asn135, Lys136, Asp138, Ala166, and Lys167 each coordinate GTP. GDP contacts are provided by residues 135–138 (NKCD) and 165–167 (SAK). Phosphoserine is present on Ser190. Residues 190–219 (SLEPSSSPGSNGKGPALGDTPPPQPSSCGC) are disordered. Low complexity predominate over residues 193–203 (PSSSPGSNGKG). Pro residues predominate over residues 209-219 (TPPPQPSSCGC). 2 S-geranylgeranyl cysteine lipidation sites follow: Cys217 and Cys219. Position 219 is a cysteine methyl ester; partial (Cys219).

This sequence belongs to the small GTPase superfamily. Rab family. In terms of assembly, interacts with RIMS1, RIMS2, RPH3A and RPH3AL. Interacts with RAB3IP. The GTP-bound form interacts with REP15. Interacts with CHM; phosphorylation at Thr-86 disrupts this interaction. Interacts with MADD (via uDENN domain); the GTP-bound form is preferred for interaction. Mg(2+) serves as cofactor. In fetal glands the majority of the proteins are methylated, whereas in neonatal and adult glands, only 50% are methylated. Post-translationally, phosphorylation of Thr-86 in the switch II region by LRRK2 prevents the association of RAB regulatory proteins, including CHM. As to expression, highest levels found in lung.

The protein resides in the cell membrane. It catalyses the reaction GTP + H2O = GDP + phosphate + H(+). Its activity is regulated as follows. Regulated by guanine nucleotide exchange factors (GEFs) which promote the exchange of bound GDP for free GTP. Regulated by GTPase activating proteins (GAPs) which increase the GTP hydrolysis activity. Inhibited by GDP dissociation inhibitors (GDIs) which prevent Rab-GDP dissociation. In terms of biological role, the small GTPases Rab are key regulators of intracellular membrane trafficking, from the formation of transport vesicles to their fusion with membranes. Rabs cycle between an inactive GDP-bound form and an active GTP-bound form that is able to recruit to membranes different sets of downstream effectors directly responsible for vesicle formation, movement, tethering and fusion. RAB3D may be involved in the insulin-induced exocytosis of GLUT4-containing vesicles in adipocytes. The polypeptide is GTP-binding protein Rab-3D (Rattus norvegicus (Rat)).